Here is an 853-residue protein sequence, read N- to C-terminus: uncharacterized protein (853 aa).

2 coiled-coil regions span residues 313-343 (RTDEDFKEAAKKREESEKRMNKMLENRLKVA) and 480-528 (EGQV…SELI).

This is an uncharacterized protein from Ostreid herpesvirus 1 (isolate France) (OsHV-1).